A 595-amino-acid polypeptide reads, in one-letter code: O-phosphoseryl-tRNA(Sec) selenium transferase (595 aa).

Arg-75 contacts pyridoxal 5'-phosphate. Positions 96 to 106 are phosphate loop (P-loop); that stretch reads GRSGDLFSEQP. Positions 97, 98, and 105 each coordinate substrate. The span at 174-187 shows a compositional bias: polar residues; it reads RTVTKDSTSATSAA. 2 disordered regions span residues 174–208 and 257–278; these read RTVTKDSTSATSAAPVQEPPMSEADRDRHDRTSLP and STNRDSLDRGQDSIGSPSTPTS. The segment covering 196 to 205 has biased composition (basic and acidic residues); it reads EADRDRHDRT. Arg-358 lines the tRNA pocket. Lys-371 carries the N6-(pyridoxal phosphate)lysine modification. Arg-400 lines the substrate pocket.

The protein belongs to the SepSecS family. As to quaternary structure, homotetramer composed of two homodimers. Pyridoxal 5'-phosphate serves as cofactor.

The protein resides in the cytoplasm. The catalysed reaction is O-phospho-L-seryl-tRNA(Sec) + selenophosphate + H2O = L-selenocysteinyl-tRNA(Sec) + 2 phosphate. The protein operates within aminoacyl-tRNA biosynthesis; selenocysteinyl-tRNA(Sec) biosynthesis; selenocysteinyl-tRNA(Sec) from L-seryl-tRNA(Sec) (archaeal/eukaryal route): step 2/2. Functionally, converts O-phosphoseryl-tRNA(Sec) to selenocysteinyl-tRNA(Sec) required for selenoprotein biosynthesis. In Leishmania donovani, this protein is O-phosphoseryl-tRNA(Sec) selenium transferase.